The sequence spans 274 residues: Formamidopyrimidine-DNA glycosylase (274 aa).

The Schiff-base intermediate with DNA role is filled by proline 2. Glutamate 3 functions as the Proton donor in the catalytic mechanism. The Proton donor; for beta-elimination activity role is filled by lysine 58. Positions 91, 110, and 152 each coordinate DNA. Residues 237 to 271 (KVYGRKNLPCLVCENKIETVVIAGRHSAFCPHCQP) form an FPG-type zinc finger. Arginine 261 functions as the Proton donor; for delta-elimination activity in the catalytic mechanism.

It belongs to the FPG family. Monomer. Zn(2+) serves as cofactor.

The enzyme catalyses Hydrolysis of DNA containing ring-opened 7-methylguanine residues, releasing 2,6-diamino-4-hydroxy-5-(N-methyl)formamidopyrimidine.. It carries out the reaction 2'-deoxyribonucleotide-(2'-deoxyribose 5'-phosphate)-2'-deoxyribonucleotide-DNA = a 3'-end 2'-deoxyribonucleotide-(2,3-dehydro-2,3-deoxyribose 5'-phosphate)-DNA + a 5'-end 5'-phospho-2'-deoxyribonucleoside-DNA + H(+). In terms of biological role, involved in base excision repair of DNA damaged by oxidation or by mutagenic agents. Acts as a DNA glycosylase that recognizes and removes damaged bases. Has a preference for oxidized purines, such as 7,8-dihydro-8-oxoguanine (8-oxoG). Has AP (apurinic/apyrimidinic) lyase activity and introduces nicks in the DNA strand. Cleaves the DNA backbone by beta-delta elimination to generate a single-strand break at the site of the removed base with both 3'- and 5'-phosphates. In Legionella pneumophila (strain Lens), this protein is Formamidopyrimidine-DNA glycosylase.